A 263-amino-acid polypeptide reads, in one-letter code: Phosphoinositide-3-kinase-interacting protein 1 (263 aa).

The N-terminal stretch at 1–21 is a signal peptide; that stretch reads MLLAWVQAFLVSNMLLAEAYG. The Extracellular segment spans residues 22 to 168; sequence SGGCFWDNGH…NSKEKKDLGT (147 aa). Residues 24 to 101 enclose the Kringle domain; that stretch reads GCFWDNGHLY…EKRPCEDLRC (78 aa). Intrachain disulfides connect Cys-25-Cys-101, Cys-46-Cys-82, and Cys-70-Cys-96. The O-linked (GalNAc...) serine glycan is linked to Ser-39. An N-linked (GlcNAc...) (complex) asparagine glycan is attached at Asn-66. The helical transmembrane segment at 169-189 threads the bilayer; that stretch reads LGYVLGITMMVIIIAIGAGII. The Cytoplasmic portion of the chain corresponds to 190–263; the sequence is LGYSYKRGKD…LMGQAGTPGA (74 aa). Over residues 242 to 251 the composition is skewed to polar residues; it reads QTPVDPQEGT. The tract at residues 242–263 is disordered; that stretch reads QTPVDPQEGTTPLMGQAGTPGA.

In terms of processing, N- and O-glycosylated. O-glycosylated with core 1 or possibly core 8 glycans. N-glycan heterogeneity at Asn-66: dHex1Hex5HexNAc4 (major) and dHex1Hex6HexNAc5 (minor).

The protein localises to the cell membrane. In terms of biological role, negative regulator of hepatic phosphatidylinositol 3-kinase (PI3K) activity. The sequence is that of Phosphoinositide-3-kinase-interacting protein 1 (PIK3IP1) from Homo sapiens (Human).